The chain runs to 141 residues: Hemoglobin subunit alpha-A (141 aa).

One can recognise a Globin domain in the interval 1–141 (VLSGTDKTNV…VGAVLTAKYR (141 aa)). Residue His-58 participates in O2 binding. Residue His-87 coordinates heme b.

Belongs to the globin family. Heterotetramer of two alpha chains and two beta chains. As to expression, red blood cells.

In terms of biological role, involved in oxygen transport from the lung to the various peripheral tissues. This chain is Hemoglobin subunit alpha-A (HBAA), found in Struthio camelus (Common ostrich).